Here is a 309-residue protein sequence, read N- to C-terminus: Probable cell division protein WhiA (309 aa).

Residues 275 to 309 (SLKELGELVPGGPISKSGINHRLRKINQYAEKLRA) constitute a DNA-binding region (H-T-H motif).

This sequence belongs to the WhiA family.

Involved in cell division and chromosome segregation. The sequence is that of Probable cell division protein WhiA from Pediococcus pentosaceus (strain ATCC 25745 / CCUG 21536 / LMG 10740 / 183-1w).